A 530-amino-acid polypeptide reads, in one-letter code: ATP-dependent 6-phosphofructokinase 4, chloroplastic (530 aa).

A chloroplast-targeting transit peptide spans 1–54; sequence MEASISFLGSTKPNISLFNPSSNVLPRRDFPLPALKLKKVSVLPRILHQKRLIR. Residue S121 is modified to Phosphoserine. Residues G152, 215 to 216, and 240 to 243 contribute to the ATP site; these read RG and GGGT. Substrate contacts are provided by residues 269–271, 314–316, E370, and 427–430; these read TID, MGR, and YMIR. Catalysis depends on D271, which acts as the Proton acceptor.

Belongs to the phosphofructokinase type A (PFKA) family. PPi-dependent PFK group II subfamily. Atypical ATP-dependent clade 'X' sub-subfamily. As to quaternary structure, homotetramer. The cofactor is Mg(2+). As to expression, expressed in leaves, stems and flowers.

It is found in the plastid. The protein resides in the chloroplast. It catalyses the reaction beta-D-fructose 6-phosphate + ATP = beta-D-fructose 1,6-bisphosphate + ADP + H(+). Its pathway is carbohydrate degradation; glycolysis; D-glyceraldehyde 3-phosphate and glycerone phosphate from D-glucose: step 3/4. Its activity is regulated as follows. Allosterically activated by AMP. Its function is as follows. Catalyzes the phosphorylation of D-fructose 6-phosphate to fructose 1,6-bisphosphate by ATP, the first committing step of glycolysis. This is ATP-dependent 6-phosphofructokinase 4, chloroplastic from Arabidopsis thaliana (Mouse-ear cress).